The following is a 430-amino-acid chain: Histidine--tRNA ligase (430 aa).

This sequence belongs to the class-II aminoacyl-tRNA synthetase family. In terms of assembly, homodimer.

The protein resides in the cytoplasm. The enzyme catalyses tRNA(His) + L-histidine + ATP = L-histidyl-tRNA(His) + AMP + diphosphate + H(+). This chain is Histidine--tRNA ligase, found in Acinetobacter baumannii (strain ATCC 17978 / DSM 105126 / CIP 53.77 / LMG 1025 / NCDC KC755 / 5377).